We begin with the raw amino-acid sequence, 199 residues long: Putative ATP-dependent Clp protease proteolytic subunit-like (199 aa).

The protein belongs to the peptidase S14 family. As to quaternary structure, component of the chloroplastic Clp protease core complex.

It is found in the plastid. Its subcellular location is the cyanelle. Its function is as follows. Has lost the two conserved residues (Ser and His) proposed to be part of the active site. Therefore it could be inactive. In Cyanophora paradoxa, this protein is Putative ATP-dependent Clp protease proteolytic subunit-like (clpP-B).